Consider the following 454-residue polypeptide: Kynurenine 3-monooxygenase (454 aa).

Belongs to the aromatic-ring hydroxylase family. KMO subfamily. The cofactor is FAD.

The catalysed reaction is L-kynurenine + NADPH + O2 + H(+) = 3-hydroxy-L-kynurenine + NADP(+) + H2O. It functions in the pathway cofactor biosynthesis; NAD(+) biosynthesis; quinolinate from L-kynurenine: step 1/3. Its function is as follows. Catalyzes the hydroxylation of L-kynurenine (L-Kyn) to form 3-hydroxy-L-kynurenine (L-3OHKyn). Required for synthesis of quinolinic acid. This Salinispora arenicola (strain CNS-205) protein is Kynurenine 3-monooxygenase.